The following is a 580-amino-acid chain: Alpha-thujene synthase, chloroplastic (580 aa).

Residues 1–32 (MALQLLTPSFSFQHSPSPHKLTTLRYTHHRIR) constitute a chloroplast transit peptide. Positions 296, 333, 337, 473, and 476 each coordinate (2E)-geranyl diphosphate. Residues D333 and D337 each contribute to the Mg(2+) site. The DDXXD motif motif lies at 333 to 337 (DDVYD). Positions 476, 480, and 484 each coordinate Mg(2+).

The protein belongs to the terpene synthase family. Tpsb subfamily. Monomer. Requires Mg(2+) as cofactor. Mn(2+) serves as cofactor. Expressed in developing and mature fruits. Barely detectable in leaves and shoots.

The protein resides in the plastid. Its subcellular location is the chloroplast. It carries out the reaction (2E)-geranyl diphosphate = alpha-thujene + diphosphate. It participates in secondary metabolite biosynthesis; terpenoid biosynthesis. Its function is as follows. Monoterpene synthase (TPS) involved in the biosynthesis of monoterpene natural products used by traditional Chinese medicine to treat headache, inflammation and intoxication. Catalyzes the conversion of (2E)-geranyl diphosphate (GPP) into alpha-thujene. In Litsea cubeba (Aromatic litsea), this protein is Alpha-thujene synthase, chloroplastic.